The chain runs to 64 residues: MAVQKSRKTRSRRGMRRSHDALRGAMLSKDPTTGETHLRHHISPEGYYKGRQILTPKESYEDEE.

The span at 1 to 16 (MAVQKSRKTRSRRGMR) shows a compositional bias: basic residues. The interval 1 to 64 (MAVQKSRKTR…TPKESYEDEE (64 aa)) is disordered.

Belongs to the bacterial ribosomal protein bL32 family.

The protein is Large ribosomal subunit protein bL32 of Coxiella burnetii (strain CbuK_Q154) (Coxiella burnetii (strain Q154)).